Here is a 41-residue protein sequence, read N- to C-terminus: Large ribosomal subunit protein bL36 (41 aa).

This sequence belongs to the bacterial ribosomal protein bL36 family.

This is Large ribosomal subunit protein bL36 from Azorhizobium caulinodans (strain ATCC 43989 / DSM 5975 / JCM 20966 / LMG 6465 / NBRC 14845 / NCIMB 13405 / ORS 571).